We begin with the raw amino-acid sequence, 536 residues long: GATA zinc finger domain-containing protein 9 (536 aa).

Polar residues-rich tracts occupy residues 1–20 (MTSFLLFNPGSLQQQQQPHS) and 36–55 (CQSSFSTPLGGSNGINNPNA). Disordered regions lie at residues 1 to 77 (MTSF…LSGS), 183 to 211 (SSSLSSEDDDCCYETEEDDNGEDGEVVRS), 237 to 258 (RSAFKKNKKDYHHGSSAGGGGS), 273 to 342 (QLHY…GFVQ), and 370 to 423 (ALFS…NISS). The segment covering 56-72 (TTNNTTTTTTTTTTTTN) has biased composition (low complexity). Over residues 188–206 (SEDDDCCYETEEDDNGEDG) the composition is skewed to acidic residues. Residues 237-247 (RSAFKKNKKDY) are compositionally biased toward basic residues. The span at 273–283 (QLHYSNSMTDN) shows a compositional bias: polar residues. Composition is skewed to low complexity over residues 318-335 (SNSNNNNNNNNNNNNNNN) and 379-399 (PSPTLGSSCGSSSPGLNNSGN). The GATA-type zinc finger occupies 479–504 (CRHCGTTDTPEWRRGPDGRKSLCNAC).

The sequence is that of GATA zinc finger domain-containing protein 9 (gtaI) from Dictyostelium discoideum (Social amoeba).